The primary structure comprises 63 residues: Synergistic-type venom protein C9S3, chain 1 (63 aa).

Intrachain disulfides connect Cys3-Cys24, Cys17-Cys42, and Cys46-Cys57.

The protein belongs to the three-finger toxin family. Short-chain subfamily. Aminergic toxin sub-subfamily. Heterodimer of C9S3 chain 1 and chain 2 (AC P01409); disulfide-linked. Expressed by the venom gland.

The protein resides in the secreted. This protein shows a synergetic toxic effect in that it enhances the toxicity of other toxins. This is Synergistic-type venom protein C9S3, chain 1 from Dendroaspis angusticeps (Eastern green mamba).